Here is a 659-residue protein sequence, read N- to C-terminus: ATP-binding cassette sub-family D member 3 (659 aa).

The segment at 2 to 61 (AAFSKYLTARNSSLAGAAFLLFCLLHKRRRALGLHGKKSGKPPLQNNEKEGKKERAVVDK) is interaction with PEX19. A glycan (N-linked (GlcNAc...) asparagine) is linked at Asn12. Lys61 carries the N6-acetyllysine modification. The chain crosses the membrane as a helical span at residues 84 to 104 (GYLILIAVMLVSRTYCDVWMI). One can recognise an ABC transmembrane type-1 domain in the interval 85-372 (YLILIAVMLV…MLLRMSQALG (288 aa)). Asn106 carries N-linked (GlcNAc...) asparagine glycosylation. Residues 126–146 (LFNFIAAMPLISLVNNFLKYG) form a helical membrane-spanning segment. N-linked (GlcNAc...) asparagine glycosylation is present at Asn206. The chain crosses the membrane as a helical span at residues 224 to 244 (AIGAQGPASMMAYLLVSGLFL). Lys260 carries the post-translational modification N6-acetyllysine. A helical transmembrane segment spans residues 313–333 (MGFIDSIIAKYIATVVGYLVV). Lys399 is subject to N6-acetyllysine. Ser424 is modified (phosphoserine). The region spanning 434–659 (INADNIIKFD…ITEDTVEFGS (226 aa)) is the ABC transporter domain. 473–480 (GPNGCGKS) contacts ATP. Lys533 bears the N6-acetyllysine mark. Ser659 is modified (phosphoserine).

The protein belongs to the ABC transporter superfamily. ABCD family. Peroxisomal fatty acyl CoA transporter (TC 3.A.1.203) subfamily. In terms of assembly, homodimers. Can form heterodimers with ABCD1 and ABCD2. Dimerization is necessary to form an active transporter. Interacts with PEX19; mediates the targeting of ABCD3 to peroxisomes. Post-translationally, ubiquitinated by PEX2 during pexophagy in response to starvation, leading to its degradation.

It is found in the peroxisome membrane. The catalysed reaction is a very long-chain fatty acyl-CoA + H2O = a very long-chain fatty acid + CoA + H(+). It catalyses the reaction a very long-chain fatty acid(in) + ATP + H2O = a very long-chain fatty acid(out) + ADP + phosphate + H(+). It carries out the reaction a long-chain fatty acyl-CoA + H2O = a long-chain fatty acid + CoA + H(+). The enzyme catalyses a long-chain fatty acid(in) + ATP + H2O = a long-chain fatty acid(out) + ADP + phosphate + H(+). The catalysed reaction is pristanoyl-CoA + H2O = 2,6,10,14-tetramethylpentadecanoate + CoA + H(+). It catalyses the reaction 2,6,10,14-tetramethylpentadecanoate(in) + ATP + H2O = 2,6,10,14-tetramethylpentadecanoate(out) + ADP + phosphate + H(+). It carries out the reaction hexadecanedioyl-CoA + H2O = hexadecanedioate + CoA + H(+). The enzyme catalyses hexadecanedioate(in) + ATP + H2O = hexadecanedioate(out) + ADP + phosphate + H(+). The catalysed reaction is (5Z,8Z,11Z,14Z,17Z)-eicosapentaenoyl-CoA + H2O = (5Z,8Z,11Z,14Z,17Z)-eicosapentaenoate + CoA + H(+). It catalyses the reaction (5Z,8Z,11Z,14Z,17Z)-eicosapentaenoate(in) + ATP + H2O = (5Z,8Z,11Z,14Z,17Z)-eicosapentaenoate(out) + ADP + phosphate + H(+). It carries out the reaction (4Z,7Z,10Z,13Z,16Z,19Z)-docosahexaenoyl-CoA + H2O = (4Z,7Z,10Z,13Z,16Z,19Z)-docosahexaenoate + CoA + H(+). The enzyme catalyses (4Z,7Z,10Z,13Z,16Z,19Z)-docosahexaenoate(in) + ATP + H2O = (4Z,7Z,10Z,13Z,16Z,19Z)-docosahexaenoate(out) + ADP + phosphate + H(+). Its function is as follows. Broad substrate specificity ATP-dependent transporter of the ATP-binding cassette (ABC) family that catalyzes the transport of long-chain fatty acids (LCFA)-CoA, dicarboxylic acids-CoA, long-branched-chain fatty acids-CoA and bile acids from the cytosol to the peroxisome lumen for beta-oxydation. Has fatty acyl-CoA thioesterase and ATPase activities. Probably hydrolyzes fatty acyl-CoAs into free fatty acids prior to their ATP-dependent transport into peroxisomes. Thus, play a role in regulation of LCFAs and energy metabolism namely, in the degradation and biosynthesis of fatty acids by beta-oxidation. The sequence is that of ATP-binding cassette sub-family D member 3 (Abcd3) from Rattus norvegicus (Rat).